The primary structure comprises 322 residues: Hydroxypyruvate reductase (322 aa).

Residues 160–161 (RI), Asp-180, 211–212 (CP), 238–240 (NSR), and Asp-264 contribute to the NAD(+) site. Arg-240 is a catalytic residue. Glu-269 is an active-site residue. Catalysis depends on His-288, which acts as the Proton donor.

It belongs to the D-isomer specific 2-hydroxyacid dehydrogenase family.

The catalysed reaction is (R)-glycerate + NAD(+) = 3-hydroxypyruvate + NADH + H(+). It participates in carbohydrate metabolism. Functionally, involved in catabolism of D-apiose. Catalyzes the reduction of 3-hydroxypyruvate to glycerate. This is Hydroxypyruvate reductase from Blautia hydrogenotrophica (strain DSM 10507 / JCM 14656 / S5a33) (Ruminococcus hydrogenotrophicus).